The sequence spans 219 residues: Ribose-5-phosphate isomerase A (219 aa).

Residues 28 to 31, 81 to 84, and 94 to 97 contribute to the substrate site; these read TGST, DGAD, and KGGG. E103 acts as the Proton acceptor in catalysis. K121 lines the substrate pocket.

This sequence belongs to the ribose 5-phosphate isomerase family. As to quaternary structure, homodimer.

The enzyme catalyses aldehydo-D-ribose 5-phosphate = D-ribulose 5-phosphate. It participates in carbohydrate degradation; pentose phosphate pathway; D-ribose 5-phosphate from D-ribulose 5-phosphate (non-oxidative stage): step 1/1. Functionally, catalyzes the reversible conversion of ribose-5-phosphate to ribulose 5-phosphate. In Photorhabdus laumondii subsp. laumondii (strain DSM 15139 / CIP 105565 / TT01) (Photorhabdus luminescens subsp. laumondii), this protein is Ribose-5-phosphate isomerase A.